The chain runs to 296 residues: 33 kDa chaperonin (296 aa).

2 cysteine pairs are disulfide-bonded: Cys-237–Cys-239 and Cys-270–Cys-273.

Belongs to the HSP33 family. Under oxidizing conditions two disulfide bonds are formed involving the reactive cysteines. Under reducing conditions zinc is bound to the reactive cysteines and the protein is inactive.

It is found in the cytoplasm. Its function is as follows. Redox regulated molecular chaperone. Protects both thermally unfolding and oxidatively damaged proteins from irreversible aggregation. Plays an important role in the bacterial defense system toward oxidative stress. This Acetivibrio thermocellus (strain ATCC 27405 / DSM 1237 / JCM 9322 / NBRC 103400 / NCIMB 10682 / NRRL B-4536 / VPI 7372) (Clostridium thermocellum) protein is 33 kDa chaperonin.